We begin with the raw amino-acid sequence, 661 residues long: uncharacterized protein (661 aa).

The segment at Leu-25–Asn-52 is disordered. The segment covering Thr-42 to Asn-52 has biased composition (polar residues). The SANT domain maps to Ser-246 to Asp-297. Disordered regions lie at residues Thr-306–Gly-329, Tyr-478–Glu-499, Pro-548–Leu-570, and Arg-604–Gln-633. The segment covering Thr-308 to Lys-328 has biased composition (basic residues). The span at Tyr-478 to Ser-487 shows a compositional bias: basic and acidic residues. Over residues Arg-604–Thr-617 the composition is skewed to basic and acidic residues.

The protein resides in the nucleus. This is an uncharacterized protein from Schizosaccharomyces pombe (strain 972 / ATCC 24843) (Fission yeast).